The sequence spans 409 residues: Homoserine O-succinyltransferase (409 aa).

In terms of domain architecture, AB hydrolase-1 spans 43–380; sequence NAIVVCHALN…PHGHDAFLLD (338 aa). The Nucleophile role is filled by S149. R219 provides a ligand contact to substrate. Positions 244-268 are disordered; sequence TLPAARGSLPPEGTDPTRGGPASDR. Active-site residues include D341 and H374. D375 is a binding site for substrate.

It belongs to the AB hydrolase superfamily. MetX family. In terms of assembly, homodimer.

The protein localises to the cytoplasm. The catalysed reaction is L-homoserine + succinyl-CoA = O-succinyl-L-homoserine + CoA. It functions in the pathway amino-acid biosynthesis; L-methionine biosynthesis via de novo pathway; O-succinyl-L-homoserine from L-homoserine: step 1/1. Functionally, transfers a succinyl group from succinyl-CoA to L-homoserine, forming succinyl-L-homoserine. This is Homoserine O-succinyltransferase from Comamonas testosteroni (strain DSM 14576 / KF-1) (Pseudomonas testosteroni).